The following is a 659-amino-acid chain: Exocyst complex component 5 (659 aa).

The stretch at 1 to 58 (MRFEEEIGSLQMLCDQFQNKINTLEKQMNEEKKDYVQKLHRLHEKNGEAIDKMKQLDH) forms a coiled coil.

It belongs to the SEC10 family. In terms of assembly, the exocyst complex is composed of sec-3/exoc1, sec-5/exoc2, sec-6/exoc3, sec-8/exoc4, sec-10/exoc5, sec-15/exoc6, exo-70/exoc7 and exo-84/exoc8.

Its function is as follows. Component of the exocyst complex involved in the docking of exocytic vesicles with fusion sites on the plasma membrane. The polypeptide is Exocyst complex component 5 (sec-10) (Caenorhabditis elegans).